The primary structure comprises 365 residues: Probable dual-specificity RNA methyltransferase RlmN (365 aa).

The active-site Proton acceptor is the glutamate 108. The region spanning 114–347 (HNYGNSVCVT…VTIRREHGHD (234 aa)) is the Radical SAM core domain. Residues cysteine 121 and cysteine 352 are joined by a disulfide bond. [4Fe-4S] cluster-binding residues include cysteine 128, cysteine 132, and cysteine 135. Residues 178 to 179 (GE), serine 210, 233 to 235 (SLH), and asparagine 309 each bind S-adenosyl-L-methionine. Cysteine 352 (S-methylcysteine intermediate) is an active-site residue.

The protein belongs to the radical SAM superfamily. RlmN family. It depends on [4Fe-4S] cluster as a cofactor.

The protein resides in the cytoplasm. The enzyme catalyses adenosine(2503) in 23S rRNA + 2 reduced [2Fe-2S]-[ferredoxin] + 2 S-adenosyl-L-methionine = 2-methyladenosine(2503) in 23S rRNA + 5'-deoxyadenosine + L-methionine + 2 oxidized [2Fe-2S]-[ferredoxin] + S-adenosyl-L-homocysteine. It carries out the reaction adenosine(37) in tRNA + 2 reduced [2Fe-2S]-[ferredoxin] + 2 S-adenosyl-L-methionine = 2-methyladenosine(37) in tRNA + 5'-deoxyadenosine + L-methionine + 2 oxidized [2Fe-2S]-[ferredoxin] + S-adenosyl-L-homocysteine. Its function is as follows. Specifically methylates position 2 of adenine 2503 in 23S rRNA and position 2 of adenine 37 in tRNAs. This Geobacillus kaustophilus (strain HTA426) protein is Probable dual-specificity RNA methyltransferase RlmN.